The following is a 181-amino-acid chain: Endoribonuclease YbeY (181 aa).

Zn(2+) is bound by residues His-115, His-119, and His-125.

It belongs to the endoribonuclease YbeY family. Requires Zn(2+) as cofactor.

The protein resides in the cytoplasm. Functionally, single strand-specific metallo-endoribonuclease involved in late-stage 70S ribosome quality control and in maturation of the 3' terminus of the 16S rRNA. The protein is Endoribonuclease YbeY of Bifidobacterium adolescentis (strain ATCC 15703 / DSM 20083 / NCTC 11814 / E194a).